The following is a 196-amino-acid chain: Lipoprotein signal peptidase (196 aa).

A run of 3 helical transmembrane segments spans residues 43–63 (LMLK…GISF), 75–95 (AVFI…MVCS), and 100–120 (GFAG…DRLF). Active-site residues include Asp126 and Asp144. Residues 135–155 (YSFPVFNLADCFITIGVIILI) traverse the membrane as a helical segment.

Belongs to the peptidase A8 family.

It is found in the cell inner membrane. The enzyme catalyses Release of signal peptides from bacterial membrane prolipoproteins. Hydrolyzes -Xaa-Yaa-Zaa-|-(S,diacylglyceryl)Cys-, in which Xaa is hydrophobic (preferably Leu), and Yaa (Ala or Ser) and Zaa (Gly or Ala) have small, neutral side chains.. It participates in protein modification; lipoprotein biosynthesis (signal peptide cleavage). This protein specifically catalyzes the removal of signal peptides from prolipoproteins. The chain is Lipoprotein signal peptidase from Rickettsia canadensis (strain McKiel).